The following is a 115-amino-acid chain: Holo-[acyl-carrier-protein] synthase (115 aa).

Residues aspartate 8 and glutamate 50 each contribute to the Mg(2+) site.

It belongs to the P-Pant transferase superfamily. AcpS family. Requires Mg(2+) as cofactor.

It is found in the cytoplasm. It carries out the reaction apo-[ACP] + CoA = holo-[ACP] + adenosine 3',5'-bisphosphate + H(+). Transfers the 4'-phosphopantetheine moiety from coenzyme A to a Ser of acyl-carrier-protein. The polypeptide is Holo-[acyl-carrier-protein] synthase (Cutibacterium acnes (strain DSM 16379 / KPA171202) (Propionibacterium acnes)).